Reading from the N-terminus, the 361-residue chain is Terpene synthase 6 (361 aa).

The DDxx(x)D/E motif motif lies at 81-86; the sequence is DDVLDA. The short motif at 223–231 is the NDxxSxxxD/E motif element; the sequence is NDLVSYEKE.

Belongs to the terpene synthase family.

It carries out the reaction (2E,6E)-farnesyl diphosphate = (2S,3R,6S,9S)-(-)-protoillud-7-ene + diphosphate. Its function is as follows. Terpene synthase that converts its substrate farnesyl diphosphate (FPP) into the sesquiterpene (2S,3R,6S,9S)-(-)-protoillud-7-ene. This chain is Terpene synthase 6, found in Dictyostelium discoideum (Social amoeba).